Consider the following 254-residue polypeptide: Ubiquinone/menaquinone biosynthesis C-methyltransferase UbiE (254 aa).

S-adenosyl-L-methionine-binding positions include Thr-77, Asp-98, 126–127 (NA), and Ser-143.

The protein belongs to the class I-like SAM-binding methyltransferase superfamily. MenG/UbiE family.

The catalysed reaction is a 2-demethylmenaquinol + S-adenosyl-L-methionine = a menaquinol + S-adenosyl-L-homocysteine + H(+). The enzyme catalyses a 2-methoxy-6-(all-trans-polyprenyl)benzene-1,4-diol + S-adenosyl-L-methionine = a 5-methoxy-2-methyl-3-(all-trans-polyprenyl)benzene-1,4-diol + S-adenosyl-L-homocysteine + H(+). It participates in quinol/quinone metabolism; menaquinone biosynthesis; menaquinol from 1,4-dihydroxy-2-naphthoate: step 2/2. The protein operates within cofactor biosynthesis; ubiquinone biosynthesis. Its function is as follows. Methyltransferase required for the conversion of demethylmenaquinol (DMKH2) to menaquinol (MKH2) and the conversion of 2-polyprenyl-6-methoxy-1,4-benzoquinol (DDMQH2) to 2-polyprenyl-3-methyl-6-methoxy-1,4-benzoquinol (DMQH2). This chain is Ubiquinone/menaquinone biosynthesis C-methyltransferase UbiE, found in Blochmanniella floridana.